A 170-amino-acid polypeptide reads, in one-letter code: Transcriptional repressor NrdR (170 aa).

The segment at 3–34 (CPFCRHPDSRVVDSRTTDDGTSIRRRRQCPDC) is a zinc-finger region. Residues 46–136 (LMVVKRSGVT…VYRAFDSLED (91 aa)) enclose the ATP-cone domain. A disordered region spans residues 148-170 (RPSAEDRGSGETLEVPAPAIAAD).

This sequence belongs to the NrdR family. The cofactor is Zn(2+).

Its function is as follows. Negatively regulates transcription of bacterial ribonucleotide reductase nrd genes and operons by binding to NrdR-boxes. This Streptomyces griseus subsp. griseus (strain JCM 4626 / CBS 651.72 / NBRC 13350 / KCC S-0626 / ISP 5235) protein is Transcriptional repressor NrdR.